The following is a 453-amino-acid chain: uncharacterized protein (453 aa).

Residues 5 to 63 (LLKKNQSIELTIEDLTHDGSGVGKIDGYPFFIPNTLPGEKVTAKIIKLNKNYGFARMEN) enclose the TRAM domain. 4 residues coordinate [4Fe-4S] cluster: cysteine 76, cysteine 82, cysteine 85, and cysteine 162. Glutamine 285, tyrosine 314, glutamate 335, and aspartate 383 together coordinate S-adenosyl-L-methionine. Cysteine 410 (nucleophile) is an active-site residue.

It belongs to the class I-like SAM-binding methyltransferase superfamily. RNA M5U methyltransferase family.

This is an uncharacterized protein from Listeria monocytogenes serovar 1/2a (strain ATCC BAA-679 / EGD-e).